Here is a 329-residue protein sequence, read N- to C-terminus: Deoxyhypusine hydroxylase (329 aa).

4 HEAT-like PBS-type repeats span residues 65 to 91 (LKHE…VLED), 99 to 124 (RHEA…MRDD), 232 to 258 (FRHE…ALSN), and 265 to 292 (VRHE…FLND). Positions 67, 68, 100, 101, 234, 235, 267, and 268 each coordinate Fe cation.

This sequence belongs to the deoxyhypusine hydroxylase family. It depends on Fe(2+) as a cofactor.

The protein localises to the cytoplasm. Its subcellular location is the nucleus. The catalysed reaction is [eIF5A protein]-deoxyhypusine + AH2 + O2 = [eIF5A protein]-hypusine + A + H2O. The protein operates within protein modification; eIF5A hypusination. Catalyzes the hydroxylation of the N(6)-(4-aminobutyl)-L-lysine intermediate to form hypusine, an essential post-translational modification only found in mature eIF-5A factor. The sequence is that of Deoxyhypusine hydroxylase from Phaeosphaeria nodorum (strain SN15 / ATCC MYA-4574 / FGSC 10173) (Glume blotch fungus).